The following is a 256-amino-acid chain: Ubiquinone/menaquinone biosynthesis C-methyltransferase UbiE (256 aa).

S-adenosyl-L-methionine contacts are provided by residues threonine 79, aspartate 100, and aspartate 128–alanine 129.

The protein belongs to the class I-like SAM-binding methyltransferase superfamily. MenG/UbiE family.

It catalyses the reaction a 2-demethylmenaquinol + S-adenosyl-L-methionine = a menaquinol + S-adenosyl-L-homocysteine + H(+). The catalysed reaction is a 2-methoxy-6-(all-trans-polyprenyl)benzene-1,4-diol + S-adenosyl-L-methionine = a 5-methoxy-2-methyl-3-(all-trans-polyprenyl)benzene-1,4-diol + S-adenosyl-L-homocysteine + H(+). The protein operates within quinol/quinone metabolism; menaquinone biosynthesis; menaquinol from 1,4-dihydroxy-2-naphthoate: step 2/2. Its pathway is cofactor biosynthesis; ubiquinone biosynthesis. In terms of biological role, methyltransferase required for the conversion of demethylmenaquinol (DMKH2) to menaquinol (MKH2) and the conversion of 2-polyprenyl-6-methoxy-1,4-benzoquinol (DDMQH2) to 2-polyprenyl-3-methyl-6-methoxy-1,4-benzoquinol (DMQH2). In Pseudomonas syringae pv. tomato (strain ATCC BAA-871 / DC3000), this protein is Ubiquinone/menaquinone biosynthesis C-methyltransferase UbiE.